Here is a 369-residue protein sequence, read N- to C-terminus: Dual specificity protein phosphatase 1-A (369 aa).

Residues 21-138 (RAHKCLILDC…FSAQCPEFCT (118 aa)) enclose the Rhodanese domain. Thr-168 carries the post-translational modification Phosphothreonine; by MAPK1. In terms of domain architecture, Tyrosine-protein phosphatase spans 175 to 316 (GPVEILPFLY…LLQFESQVLA (142 aa)). The active-site Phosphocysteine intermediate is the Cys-260.

It belongs to the protein-tyrosine phosphatase family. Non-receptor class dual specificity subfamily. In terms of processing, phosphorylated by MAPK1/ERK2 at Thr-168 and at one or more serine residues in a progesterone-dependent manner. Phosphorylation reduces its rate of degradation but does not seem to affect phosphatase activity. As to expression, expressed in XIK-2 kidney cells.

The protein localises to the nucleus. The enzyme catalyses O-phospho-L-seryl-[protein] + H2O = L-seryl-[protein] + phosphate. It carries out the reaction O-phospho-L-threonyl-[protein] + H2O = L-threonyl-[protein] + phosphate. The catalysed reaction is O-phospho-L-tyrosyl-[protein] + H2O = L-tyrosyl-[protein] + phosphate. Dual specificity phosphatase that dephosphorylates MAP kinase MAPK1/ERK2 on both 'Thr-188' and 'Tyr-190', regulating its activity during the meiotic cell cycle. In Xenopus laevis (African clawed frog), this protein is Dual specificity protein phosphatase 1-A.